The following is a 357-amino-acid chain: Protein RecA (357 aa).

Residue 71–78 (GPESSGKT) participates in ATP binding.

It belongs to the RecA family.

It is found in the cytoplasm. Functionally, can catalyze the hydrolysis of ATP in the presence of single-stranded DNA, the ATP-dependent uptake of single-stranded DNA by duplex DNA, and the ATP-dependent hybridization of homologous single-stranded DNAs. It interacts with LexA causing its activation and leading to its autocatalytic cleavage. This is Protein RecA from Ehrlichia chaffeensis (strain ATCC CRL-10679 / Arkansas).